Here is a 72-residue protein sequence, read N- to C-terminus: MSKEDSFEMEGTVVDTLPNTMFRVELENGHVVTAHISGKMRKNYIRILTGDKVRVELTPYDLSKGRITYRAR.

An S1-like domain is found at 1–72 (MSKEDSFEME…SKGRITYRAR (72 aa)).

It belongs to the IF-1 family. Component of the 30S ribosomal translation pre-initiation complex which assembles on the 30S ribosome in the order IF-2 and IF-3, IF-1 and N-formylmethionyl-tRNA(fMet); mRNA recruitment can occur at any time during PIC assembly.

The protein resides in the cytoplasm. Its function is as follows. One of the essential components for the initiation of protein synthesis. Stabilizes the binding of IF-2 and IF-3 on the 30S subunit to which N-formylmethionyl-tRNA(fMet) subsequently binds. Helps modulate mRNA selection, yielding the 30S pre-initiation complex (PIC). Upon addition of the 50S ribosomal subunit IF-1, IF-2 and IF-3 are released leaving the mature 70S translation initiation complex. The polypeptide is Translation initiation factor IF-1 (Pseudomonas savastanoi pv. phaseolicola (strain 1448A / Race 6) (Pseudomonas syringae pv. phaseolicola (strain 1448A / Race 6))).